A 71-amino-acid polypeptide reads, in one-letter code: UPF0437 protein asl1434 (71 aa).

It belongs to the UPF0437 family.

The sequence is that of UPF0437 protein asl1434 from Nostoc sp. (strain PCC 7120 / SAG 25.82 / UTEX 2576).